The sequence spans 97 residues: Large ribosomal subunit protein eL21 (97 aa).

Belongs to the eukaryotic ribosomal protein eL21 family.

This chain is Large ribosomal subunit protein eL21 (rpl21e), found in Archaeoglobus fulgidus (strain ATCC 49558 / DSM 4304 / JCM 9628 / NBRC 100126 / VC-16).